The sequence spans 196 residues: Holliday junction branch migration complex subunit RuvA (196 aa).

Residues 1-63 (MIASVRGEVI…EDSMTLYGFA (63 aa)) form a domain I region. The domain II stretch occupies residues 64–142 (DADARDLFGT…PVTTGAGVTA (79 aa)). The flexible linker stretch occupies residues 143–151 (VGGHAVRGP). The segment at 151 to 196 (PVVEALVGLGFAAKQAEEACDKVLAADPDATTSSALRAALSMLGKK) is domain III.

The protein belongs to the RuvA family. In terms of assembly, homotetramer. Forms an RuvA(8)-RuvB(12)-Holliday junction (HJ) complex. HJ DNA is sandwiched between 2 RuvA tetramers; dsDNA enters through RuvA and exits via RuvB. An RuvB hexamer assembles on each DNA strand where it exits the tetramer. Each RuvB hexamer is contacted by two RuvA subunits (via domain III) on 2 adjacent RuvB subunits; this complex drives branch migration. In the full resolvosome a probable DNA-RuvA(4)-RuvB(12)-RuvC(2) complex forms which resolves the HJ.

Its subcellular location is the cytoplasm. In terms of biological role, the RuvA-RuvB-RuvC complex processes Holliday junction (HJ) DNA during genetic recombination and DNA repair, while the RuvA-RuvB complex plays an important role in the rescue of blocked DNA replication forks via replication fork reversal (RFR). RuvA specifically binds to HJ cruciform DNA, conferring on it an open structure. The RuvB hexamer acts as an ATP-dependent pump, pulling dsDNA into and through the RuvAB complex. HJ branch migration allows RuvC to scan DNA until it finds its consensus sequence, where it cleaves and resolves the cruciform DNA. The sequence is that of Holliday junction branch migration complex subunit RuvA from Mycobacterium sp. (strain JLS).